Consider the following 706-residue polypeptide: Polyribonucleotide nucleotidyltransferase (706 aa).

2 residues coordinate Mg(2+): aspartate 486 and aspartate 492. Residues 552-611 enclose the KH domain; it reads PRIIAMKINPEKIRDVIGKGGAVIRALTEETGTQIDIQEDGSVKIACTSMEAGELAKKRI. An S1 motif domain is found at 621-689; the sequence is GKVYEGPVIK…EKGRLRLSMK (69 aa).

It belongs to the polyribonucleotide nucleotidyltransferase family. Requires Mg(2+) as cofactor.

It is found in the cytoplasm. The enzyme catalyses RNA(n+1) + phosphate = RNA(n) + a ribonucleoside 5'-diphosphate. In terms of biological role, involved in mRNA degradation. Catalyzes the phosphorolysis of single-stranded polyribonucleotides processively in the 3'- to 5'-direction. This is Polyribonucleotide nucleotidyltransferase from Thiobacillus denitrificans (strain ATCC 25259 / T1).